A 455-amino-acid chain; its full sequence is Kynurenine 3-monooxygenase (455 aa).

The next 2 helical transmembrane spans lie at 393 to 416 and 429 to 453; these read WLFR…SMPY and LLWR…YWQR.

It belongs to the aromatic-ring hydroxylase family. KMO subfamily. It depends on FAD as a cofactor.

It localises to the mitochondrion. The protein localises to the membrane. It catalyses the reaction L-kynurenine + NADPH + O2 + H(+) = 3-hydroxy-L-kynurenine + NADP(+) + H2O. Its pathway is cofactor biosynthesis; NAD(+) biosynthesis; quinolinate from L-kynurenine: step 1/3. Its function is as follows. Catalyzes the hydroxylation of L-kynurenine (L-Kyn) to form 3-hydroxy-L-kynurenine (L-3OHKyn). Required for synthesis of quinolinic acid. This Drosophila willistoni (Fruit fly) protein is Kynurenine 3-monooxygenase.